The following is a 266-amino-acid chain: MRLIPLNRAEQVGAWSAQHIVNRINAFNPTADRPFVLGLPTGGTPLNTYKKLIELHKAGEVSFKNVVTFNMDEYVGLPADHPESYRTFMHENFFNHIDIQPENINLLNGNAEDHEAECQRYEDKIKSYGRINLFMGGVGNDGHIAFNEPASSLSSRTRIKTLTEDTRIANSRFFGGDMNLVPEYSLTIGVGTLLDSEEIMILITGHNKGLALQAAVEGSVNHLWTVSALQLHPKSVIVCDEPSTQELKVKTVKYFQQLEAKNMEGF.

Catalysis depends on Asp72, which acts as the Proton acceptor; for enolization step. Catalysis depends on Asp141, which acts as the For ring-opening step. His143 functions as the Proton acceptor; for ring-opening step in the catalytic mechanism. The active-site For ring-opening step is the Glu148.

It belongs to the glucosamine/galactosamine-6-phosphate isomerase family. NagB subfamily. In terms of assembly, homohexamer.

It catalyses the reaction alpha-D-glucosamine 6-phosphate + H2O = beta-D-fructose 6-phosphate + NH4(+). It functions in the pathway amino-sugar metabolism; N-acetylneuraminate degradation; D-fructose 6-phosphate from N-acetylneuraminate: step 5/5. Allosterically activated by N-acetylglucosamine 6-phosphate (GlcNAc6P). In terms of biological role, catalyzes the reversible isomerization-deamination of glucosamine 6-phosphate (GlcN6P) to form fructose 6-phosphate (Fru6P) and ammonium ion. This Aliivibrio fischeri (strain ATCC 700601 / ES114) (Vibrio fischeri) protein is Glucosamine-6-phosphate deaminase.